Reading from the N-terminus, the 388-residue chain is Chorismate synthase (388 aa).

Positions 39 and 45 each coordinate NADP(+). Residues 132–134, 251–252, Gly-296, 311–315, and Arg-337 contribute to the FMN site; these read RSS, NA, and KPIPT.

It belongs to the chorismate synthase family. As to quaternary structure, homotetramer. Requires FMNH2 as cofactor.

It carries out the reaction 5-O-(1-carboxyvinyl)-3-phosphoshikimate = chorismate + phosphate. Its pathway is metabolic intermediate biosynthesis; chorismate biosynthesis; chorismate from D-erythrose 4-phosphate and phosphoenolpyruvate: step 7/7. In terms of biological role, catalyzes the anti-1,4-elimination of the C-3 phosphate and the C-6 proR hydrogen from 5-enolpyruvylshikimate-3-phosphate (EPSP) to yield chorismate, which is the branch point compound that serves as the starting substrate for the three terminal pathways of aromatic amino acid biosynthesis. This reaction introduces a second double bond into the aromatic ring system. The sequence is that of Chorismate synthase from Staphylococcus aureus (strain bovine RF122 / ET3-1).